Here is a 197-residue protein sequence, read N- to C-terminus: Glycerol-3-phosphate acyltransferase (197 aa).

Helical transmembrane passes span 7-27, 56-76, 82-102, 116-136, and 157-177; these read PSIA…LLLT, LAAL…WIAW, DIGW…WLGF, FGLG…MLAI, and YFGR…IIWL.

This sequence belongs to the PlsY family. In terms of assembly, probably interacts with PlsX.

Its subcellular location is the cell inner membrane. It catalyses the reaction an acyl phosphate + sn-glycerol 3-phosphate = a 1-acyl-sn-glycero-3-phosphate + phosphate. It participates in lipid metabolism; phospholipid metabolism. Functionally, catalyzes the transfer of an acyl group from acyl-phosphate (acyl-PO(4)) to glycerol-3-phosphate (G3P) to form lysophosphatidic acid (LPA). This enzyme utilizes acyl-phosphate as fatty acyl donor, but not acyl-CoA or acyl-ACP. The protein is Glycerol-3-phosphate acyltransferase of Erythrobacter litoralis (strain HTCC2594).